A 305-amino-acid polypeptide reads, in one-letter code: Phosphoribosylaminoimidazole-succinocarboxamide synthase (305 aa).

Belongs to the SAICAR synthetase family.

It catalyses the reaction 5-amino-1-(5-phospho-D-ribosyl)imidazole-4-carboxylate + L-aspartate + ATP = (2S)-2-[5-amino-1-(5-phospho-beta-D-ribosyl)imidazole-4-carboxamido]succinate + ADP + phosphate + 2 H(+). It functions in the pathway purine metabolism; IMP biosynthesis via de novo pathway; 5-amino-1-(5-phospho-D-ribosyl)imidazole-4-carboxamide from 5-amino-1-(5-phospho-D-ribosyl)imidazole-4-carboxylate: step 1/2. The sequence is that of Phosphoribosylaminoimidazole-succinocarboxamide synthase from Tropheryma whipplei (strain Twist) (Whipple's bacillus).